The primary structure comprises 246 residues: LexA repressor (246 aa).

Positions 1–34 (MATPQTGKKTPSRRVSELPDGPPDATGLTPRQQR) are disordered. A DNA-binding region (H-T-H motif) is located at residues 52–72 (MREIGEAVGLTSSSSVAHQLK). Residues Ser170 and Lys207 each act as for autocatalytic cleavage activity in the active site.

The protein belongs to the peptidase S24 family. Homodimer.

It catalyses the reaction Hydrolysis of Ala-|-Gly bond in repressor LexA.. In terms of biological role, represses a number of genes involved in the response to DNA damage (SOS response), including recA and lexA. In the presence of single-stranded DNA, RecA interacts with LexA causing an autocatalytic cleavage which disrupts the DNA-binding part of LexA, leading to derepression of the SOS regulon and eventually DNA repair. This chain is LexA repressor, found in Nocardioides sp. (strain ATCC BAA-499 / JS614).